Consider the following 207-residue polypeptide: Probable GTP-binding protein EngB (207 aa).

Positions 22–194 (DLPEVAFAGR…LQRLDVALSD (173 aa)) constitute an EngB-type G domain. Residues 30 to 37 (GRSNVGKS), 57 to 61 (GRTQL), 75 to 78 (DLPG), 142 to 145 (TKVD), and 173 to 175 (FSA) each bind GTP. Mg(2+)-binding residues include Ser-37 and Thr-59.

This sequence belongs to the TRAFAC class TrmE-Era-EngA-EngB-Septin-like GTPase superfamily. EngB GTPase family. Mg(2+) is required as a cofactor.

Its function is as follows. Necessary for normal cell division and for the maintenance of normal septation. The sequence is that of Probable GTP-binding protein EngB from Syntrophotalea carbinolica (strain DSM 2380 / NBRC 103641 / GraBd1) (Pelobacter carbinolicus).